Consider the following 247-residue polypeptide: Myelin-oligodendrocyte glycoprotein (247 aa).

Positions 1 to 29 (MASLSRPSLPSCLCSFLLLLLLQVSSSYA) are cleaved as a signal peptide. Residues 30–154 (GQFRVIGPRQ…EDPFYWVSPA (125 aa)) are Extracellular-facing. Positions 31-145 (QFRVIGPRQP…EEAAIELKVE (115 aa)) constitute an Ig-like V-type domain. A disulfide bridge connects residues Cys53 and Cys127. Asn60 carries N-linked (GlcNAc...) asparagine glycosylation. A helical membrane pass occupies residues 155–175 (VLVLLAVLPVLLLQITVGLVF). Over 176–210 (LCLQYRLRGKLRAEIENLHRTFDPHFLRVPCWKIT) the chain is Cytoplasmic. The chain crosses the membrane as a helical span at residues 211–231 (LFVIVPVLGPLVALIICYNWL). The Extracellular portion of the chain corresponds to 232 to 247 (HRRLAGQFLEELRNPF).

The protein belongs to the immunoglobulin superfamily. BTN/MOG family. Homodimer.

It localises to the membrane. Minor component of the myelin sheath. May be involved in completion and/or maintenance of the myelin sheath and in cell-cell communication. Mediates homophilic cell-cell adhesion. The chain is Myelin-oligodendrocyte glycoprotein (MOG) from Macaca fascicularis (Crab-eating macaque).